Here is a 932-residue protein sequence, read N- to C-terminus: Protein translocase subunit SecA (932 aa).

Residues Gln-87, 105 to 109, and Asp-515 contribute to the ATP site; that span reads GEGKT. Zn(2+) contacts are provided by Cys-916, Cys-918, Cys-927, and His-928.

This sequence belongs to the SecA family. As to quaternary structure, monomer and homodimer. Part of the essential Sec protein translocation apparatus which comprises SecA, SecYEG and auxiliary proteins SecDF-YajC and YidC. Zn(2+) is required as a cofactor.

Its subcellular location is the cell inner membrane. The protein localises to the cytoplasm. The enzyme catalyses ATP + H2O + cellular proteinSide 1 = ADP + phosphate + cellular proteinSide 2.. Functionally, part of the Sec protein translocase complex. Interacts with the SecYEG preprotein conducting channel. Has a central role in coupling the hydrolysis of ATP to the transfer of proteins into and across the cell membrane, serving both as a receptor for the preprotein-SecB complex and as an ATP-driven molecular motor driving the stepwise translocation of polypeptide chains across the membrane. The chain is Protein translocase subunit SecA from Burkholderia multivorans (strain ATCC 17616 / 249).